The chain runs to 158 residues: 6,7-dimethyl-8-ribityllumazine synthase (158 aa).

5-amino-6-(D-ribitylamino)uracil contacts are provided by residues Phe23, 61–63, and 85–87; these read SFE and AVI. 90 to 91 is a binding site for (2S)-2-hydroxy-3-oxobutyl phosphate; it reads DT. The active-site Proton donor is His93. Phe118 contacts 5-amino-6-(D-ribitylamino)uracil. Arg132 serves as a coordination point for (2S)-2-hydroxy-3-oxobutyl phosphate.

Belongs to the DMRL synthase family.

It carries out the reaction (2S)-2-hydroxy-3-oxobutyl phosphate + 5-amino-6-(D-ribitylamino)uracil = 6,7-dimethyl-8-(1-D-ribityl)lumazine + phosphate + 2 H2O + H(+). It functions in the pathway cofactor biosynthesis; riboflavin biosynthesis; riboflavin from 2-hydroxy-3-oxobutyl phosphate and 5-amino-6-(D-ribitylamino)uracil: step 1/2. Its function is as follows. Catalyzes the formation of 6,7-dimethyl-8-ribityllumazine by condensation of 5-amino-6-(D-ribitylamino)uracil with 3,4-dihydroxy-2-butanone 4-phosphate. This is the penultimate step in the biosynthesis of riboflavin. The protein is 6,7-dimethyl-8-ribityllumazine synthase of Prochlorococcus marinus (strain NATL1A).